The sequence spans 74 residues: Consomatin Ma1 (74 aa).

A signal peptide spans 1 to 22 (MQTAYWVMVMMMVWITAPLSEG). Positions 23 to 57 (GKLNGEIRGLVSHILIPQHTLRSLTSRDRSDNGGS) are excised as a propeptide. Cys-63 and Cys-68 are joined by a disulfide. Trp-65 is modified (D-tryptophan). 4-hydroxyproline is present on residues Pro-69, Pro-70, and Pro-72.

This sequence belongs to the conotoxin C superfamily. Consomatin family. In terms of tissue distribution, expressed by the venom duct.

Its subcellular location is the secreted. Functionally, moderately activates human somatostatin receptors (SSTR) with a preferential activation of SSTR1 and SSTR4. In vivo, does not cause behavioral changes in mice within a few minutes of intracranial injection, but causes a progressive loss of movement thereafter. Four to five hours after injection, mice recover, even with the highest dose tested. Shows antinociception and antihyperalgesia activities in two mouse models of acute pain, most probably by acting outside the central nervous system. The chain is Consomatin Ma1 from Conus magus (Magical cone).